Consider the following 58-residue polypeptide: Large ribosomal subunit protein bL32 (58 aa).

Over residues 1–15 the composition is skewed to basic residues; the sequence is MAVPKKKTSKAKRNQ. The disordered stretch occupies residues 1 to 23; the sequence is MAVPKKKTSKAKRNQRSATWKGK.

It belongs to the bacterial ribosomal protein bL32 family.

The polypeptide is Large ribosomal subunit protein bL32 (Synechococcus sp. (strain CC9902)).